We begin with the raw amino-acid sequence, 158 residues long: Ribosome maturation factor RimP (158 aa).

It belongs to the RimP family.

The protein localises to the cytoplasm. In terms of biological role, required for maturation of 30S ribosomal subunits. This Pseudomonas putida (strain ATCC 47054 / DSM 6125 / CFBP 8728 / NCIMB 11950 / KT2440) protein is Ribosome maturation factor RimP.